A 471-amino-acid chain; its full sequence is Ubiquitin carboxyl-terminal hydrolase calypso (471 aa).

One can recognise a UCH catalytic domain in the interval 45 to 276; it reads GWLELESDPG…IRFNLMAVVP (232 aa). The Nucleophile role is filled by C131. The Proton donor role is filled by H213. Positions 375–403 constitute a ULD domain; sequence NYDKFICTFLSMLAHQGVLGELVSQHLLP. A positively charged C-terminal tail required for binding nucleosomes region spans residues 405-471; the sequence is KKVSGQGAAN…KGRNKCRKRK (67 aa). A disordered region spans residues 410–471; the sequence is QGAANRISKQ…KGRNKCRKRK (62 aa). A compositionally biased stretch (low complexity) spans 420-447; sequence STTASAGGSTTGATASTPKTQQQQAAAA. Residues 457 to 471 show a composition bias toward basic residues; it reads PGRRRKGRNKCRKRK.

Belongs to the peptidase C12 family. BAP1 subfamily. Catalytic component of the polycomb repressive deubiquitinase (PR-DUB) complex, at least composed of caly/calypso, Asx and sba (MBD5/6 homolog). The PR-DUB complex associates with nucleosomes to mediate deubiquitination of histone H2AK118ub1 substrates; the association requires the positively charged C-terminal tail of caly, probably due to direct binding of DNA. Interacts (via ULD domain) with Asx (via DEUBAD domain); the interaction produces a stable heterodimer with a composite binding site for ubiquitin. Homodimerizes (via coiled-coil hinge-region between the UCH and ULD domains) to mediate assembly of 2 copies of the caly-Asx heterodimer into a bisymmetric tetramer; dimerization enhances PR-DUB association with nucleosomes.

The protein localises to the nucleus. It catalyses the reaction Thiol-dependent hydrolysis of ester, thioester, amide, peptide and isopeptide bonds formed by the C-terminal Gly of ubiquitin (a 76-residue protein attached to proteins as an intracellular targeting signal).. Functionally, catalytic component of the polycomb repressive deubiquitinase (PR-DUB) complex, a complex that specifically mediates deubiquitination of histone H2A monoubiquitinated at 'Lys-119' (H2AK118ub1). Mediates bisymmetric organization of the PR-DUB complex and is involved in association with nucleosomes to mediate deubiquitination. Does not deubiquitinate monoubiquitinated histone H2B. Required to maintain the transcriptionally repressive state of homeotic genes throughout development. The PR-DUB complex has weak or no activity toward 'Lys-48'- and 'Lys-63'-linked polyubiquitin chains. Polycomb group (PcG) protein. This is Ubiquitin carboxyl-terminal hydrolase calypso from Drosophila yakuba (Fruit fly).